A 266-amino-acid polypeptide reads, in one-letter code: Thymidylate synthase (266 aa).

Arg-24 contacts dUMP. Residue His-54 participates in (6R)-5,10-methylene-5,6,7,8-tetrahydrofolate binding. Position 129–130 (129–130) interacts with dUMP; sequence RR. Cys-149 acts as the Nucleophile in catalysis. DUMP-binding positions include 169 to 172, Asn-180, and 210 to 212; these read RSAD and HIY. Residue Asp-172 coordinates (6R)-5,10-methylene-5,6,7,8-tetrahydrofolate. Ala-265 lines the (6R)-5,10-methylene-5,6,7,8-tetrahydrofolate pocket.

It belongs to the thymidylate synthase family. Bacterial-type ThyA subfamily. As to quaternary structure, homodimer.

It localises to the cytoplasm. The enzyme catalyses dUMP + (6R)-5,10-methylene-5,6,7,8-tetrahydrofolate = 7,8-dihydrofolate + dTMP. Its pathway is pyrimidine metabolism; dTTP biosynthesis. In terms of biological role, catalyzes the reductive methylation of 2'-deoxyuridine-5'-monophosphate (dUMP) to 2'-deoxythymidine-5'-monophosphate (dTMP) while utilizing 5,10-methylenetetrahydrofolate (mTHF) as the methyl donor and reductant in the reaction, yielding dihydrofolate (DHF) as a by-product. This enzymatic reaction provides an intracellular de novo source of dTMP, an essential precursor for DNA biosynthesis. In Mycobacterium avium (strain 104), this protein is Thymidylate synthase.